A 522-amino-acid polypeptide reads, in one-letter code: Serine/threonine-protein kinase BSK1-2 (522 aa).

The interval 1–54 (MGCCGSSLRVGSHAPEKPPRRARPPPPPPQPHHPRRPSFTLNAHQAAASSSAAS) is disordered. The N-myristoyl glycine moiety is linked to residue Gly2. One can recognise a Protein kinase domain in the interval 79-338 (ANIVSESGEK…KLVSILQPLQ (260 aa)). ATP contacts are provided by residues 85–93 (SGEKAPNLV) and Lys111. Residue Asp205 is the Proton acceptor of the active site.

This sequence belongs to the protein kinase superfamily. Ser/Thr protein kinase family.

The protein localises to the cell membrane. It carries out the reaction L-seryl-[protein] + ATP = O-phospho-L-seryl-[protein] + ADP + H(+). The catalysed reaction is L-threonyl-[protein] + ATP = O-phospho-L-threonyl-[protein] + ADP + H(+). In terms of biological role, probable serine/threonine kinase that functions as a positive regulator of plant immunity. May be involved in the regulation of pattern-triggered immunity (PTI). Does not seem to be involved in responses to brassinosteroid (BR) signaling. The chain is Serine/threonine-protein kinase BSK1-2 from Oryza sativa subsp. japonica (Rice).